A 239-amino-acid polypeptide reads, in one-letter code: tRNA (guanine-N(1)-)-methyltransferase (239 aa).

S-adenosyl-L-methionine is bound by residues Gly109 and 133–138 (IGDYVL). 2 disordered regions span residues 163 to 187 (PASR…YTRP) and 217 to 239 (QRTR…DPGR). 2 stretches are compositionally biased toward basic and acidic residues: residues 165–180 (SRHD…RRLE) and 217–226 (QRTRERRPEL).

Belongs to the RNA methyltransferase TrmD family. In terms of assembly, homodimer.

Its subcellular location is the cytoplasm. The catalysed reaction is guanosine(37) in tRNA + S-adenosyl-L-methionine = N(1)-methylguanosine(37) in tRNA + S-adenosyl-L-homocysteine + H(+). Specifically methylates guanosine-37 in various tRNAs. This chain is tRNA (guanine-N(1)-)-methyltransferase, found in Mycolicibacterium paratuberculosis (strain ATCC BAA-968 / K-10) (Mycobacterium paratuberculosis).